Reading from the N-terminus, the 243-residue chain is 7-cyano-7-deazaguanine synthase (243 aa).

Phenylalanine 18–leucine 28 contacts ATP. Residues cysteine 206, cysteine 221, cysteine 224, and cysteine 227 each coordinate Zn(2+).

Belongs to the QueC family. Requires Zn(2+) as cofactor.

The catalysed reaction is 7-carboxy-7-deazaguanine + NH4(+) + ATP = 7-cyano-7-deazaguanine + ADP + phosphate + H2O + H(+). Its pathway is purine metabolism; 7-cyano-7-deazaguanine biosynthesis. In terms of biological role, catalyzes the ATP-dependent conversion of 7-carboxy-7-deazaguanine (CDG) to 7-cyano-7-deazaguanine (preQ(0)). The chain is 7-cyano-7-deazaguanine synthase from Methylorubrum extorquens (strain PA1) (Methylobacterium extorquens).